The following is a 208-amino-acid chain: Protein GrpE (208 aa).

The span at 1–12 shows a compositional bias: basic and acidic residues; sequence MTNKDESVEKNT. Residues 1 to 49 are disordered; it reads MTNKDESVEKNTESTVEVTNVKQNIDDSVEQTEESKGHLQDEAIEETSD. Over residues 13 to 23 the composition is skewed to polar residues; it reads ESTVEVTNVKQ.

The protein belongs to the GrpE family. Homodimer.

Its subcellular location is the cytoplasm. Participates actively in the response to hyperosmotic and heat shock by preventing the aggregation of stress-denatured proteins, in association with DnaK and GrpE. It is the nucleotide exchange factor for DnaK and may function as a thermosensor. Unfolded proteins bind initially to DnaJ; upon interaction with the DnaJ-bound protein, DnaK hydrolyzes its bound ATP, resulting in the formation of a stable complex. GrpE releases ADP from DnaK; ATP binding to DnaK triggers the release of the substrate protein, thus completing the reaction cycle. Several rounds of ATP-dependent interactions between DnaJ, DnaK and GrpE are required for fully efficient folding. The chain is Protein GrpE from Staphylococcus aureus (strain bovine RF122 / ET3-1).